The primary structure comprises 495 residues: Glycerol kinase (495 aa).

Residue threonine 11 participates in ADP binding. ATP contacts are provided by threonine 11, threonine 12, and serine 13. Residue threonine 11 participates in sn-glycerol 3-phosphate binding. The sn-glycerol 3-phosphate site is built by arginine 81, glutamate 82, tyrosine 133, and aspartate 242. Arginine 81, glutamate 82, tyrosine 133, aspartate 242, and glutamine 243 together coordinate glycerol. 4 residues coordinate ADP: threonine 264, glycine 307, glycine 407, and asparagine 411. The ATP site is built by threonine 264, glycine 307, and glycine 407.

It belongs to the FGGY kinase family.

It carries out the reaction glycerol + ATP = sn-glycerol 3-phosphate + ADP + H(+). Its pathway is polyol metabolism; glycerol degradation via glycerol kinase pathway; sn-glycerol 3-phosphate from glycerol: step 1/1. Inhibited by fructose 1,6-bisphosphate (FBP). Key enzyme in the regulation of glycerol uptake and metabolism. Catalyzes the phosphorylation of glycerol to yield sn-glycerol 3-phosphate. The polypeptide is Glycerol kinase (Thermus brockianus).